We begin with the raw amino-acid sequence, 390 residues long: 23S rRNA (uracil(747)-C(5))-methyltransferase RlmC (390 aa).

Residues Cys-12, Cys-20, Cys-23, and Cys-100 each coordinate [4Fe-4S] cluster. Residues Gln-225, Phe-254, Glu-275, and Asn-322 each contribute to the S-adenosyl-L-methionine site. Cys-349 acts as the Nucleophile in catalysis.

It belongs to the class I-like SAM-binding methyltransferase superfamily. RNA M5U methyltransferase family. RlmC subfamily.

The catalysed reaction is uridine(747) in 23S rRNA + S-adenosyl-L-methionine = 5-methyluridine(747) in 23S rRNA + S-adenosyl-L-homocysteine + H(+). Functionally, catalyzes the formation of 5-methyl-uridine at position 747 (m5U747) in 23S rRNA. The polypeptide is 23S rRNA (uracil(747)-C(5))-methyltransferase RlmC (Shewanella baltica (strain OS223)).